The sequence spans 453 residues: MGIKGLTGLLSENAPKCMKDHEMKTLFGRKVAIDASMSIYQFLIAVRQQDGQMLMNESGDVTSHLMGFFYRTIRMVDHGIKPCYIFDGKPPELKGSVLAKRFARREEAKEGEEEAKETGTAEDVDKLARRQVRVTREHNEECKKLLSLMGIPVVTAPGEAEAQCAELARAGKVYAAGSEDMDTLTFNSPILLRHLTFSEAKKMPISEIHLDVALRDLEMSMDQFIELCILLGCDYLEPCKGIGPKTALKLMREHGTLGKVVEHIRGKMAEKAEEIKAAADEEAEAEAEAEKYDSDPESEEGGETMINSDGEEVPAPSKLKSPKKKAPAKKKKVASSGMQIPEFWPWEEAKQLFMKPDVVNGDDLVLEWKQPDTEGLVEFLCRDKGFNEDRVRAGAAKLSKMLAAKQQGRLDGFFTVKPKEPAAKDTGKGKGKATKGEKRKAEEKGSAKKKSKN.

Positions 1–105 (MGIKGLTGLL…SVLAKRFARR (105 aa)) are N-domain. Residue D34 coordinates Mg(2+). DNA is bound by residues R47 and R71. Residues D87, E159, E161, D180, and D182 each coordinate Mg(2+). Residues 123–254 (DVDKLARRQV…KTALKLMREH (132 aa)) form an I-domain region. E159 contributes to the DNA binding site. Positions 232 and 234 each coordinate DNA. Residue D234 coordinates Mg(2+). Disordered stretches follow at residues 273–336 (EEIK…VASS) and 409–453 (RLDG…KSKN). Residues 320–333 (KSPKKKAPAKKKKV) show a composition bias toward basic residues. The segment at 406 to 414 (QQGRLDGFF) is interaction with PCNA. Residues 417 to 446 (KPKEPAAKDTGKGKGKATKGEKRKAEEKGS) show a composition bias toward basic and acidic residues.

The protein belongs to the XPG/RAD2 endonuclease family. FEN1 subfamily. Interacts with PCNA. Three molecules of FEN1 bind to one PCNA trimer with each molecule binding to one PCNA monomer. PCNA stimulates the nuclease activity without altering cleavage specificity. The cofactor is Mg(2+). Phosphorylated. Phosphorylation upon DNA damage induces relocalization to the nuclear plasma.

The protein resides in the nucleus. The protein localises to the nucleolus. It is found in the nucleoplasm. It localises to the mitochondrion. Its function is as follows. Structure-specific nuclease with 5'-flap endonuclease and 5'-3' exonuclease activities involved in DNA replication and repair. During DNA replication, cleaves the 5'-overhanging flap structure that is generated by displacement synthesis when DNA polymerase encounters the 5'-end of a downstream Okazaki fragment. It enters the flap from the 5'-end and then tracks to cleave the flap base, leaving a nick for ligation. Also involved in the long patch base excision repair (LP-BER) pathway, by cleaving within the apurinic/apyrimidinic (AP) site-terminated flap. Acts as a genome stabilization factor that prevents flaps from equilibrating into structures that lead to duplications and deletions. Also possesses 5'-3' exonuclease activity on nicked or gapped double-stranded DNA, and exhibits RNase H activity. Also involved in replication and repair of rDNA and in repairing mitochondrial DNA. This chain is Flap endonuclease 1, found in Cryptococcus neoformans var. neoformans serotype D (strain B-3501A) (Filobasidiella neoformans).